The primary structure comprises 372 residues: Histidinol-phosphate aminotransferase (372 aa).

Lys230 carries the post-translational modification N6-(pyridoxal phosphate)lysine.

The protein belongs to the class-II pyridoxal-phosphate-dependent aminotransferase family. Histidinol-phosphate aminotransferase subfamily. Homodimer. The cofactor is pyridoxal 5'-phosphate.

It catalyses the reaction L-histidinol phosphate + 2-oxoglutarate = 3-(imidazol-4-yl)-2-oxopropyl phosphate + L-glutamate. It functions in the pathway amino-acid biosynthesis; L-histidine biosynthesis; L-histidine from 5-phospho-alpha-D-ribose 1-diphosphate: step 7/9. This Paenarthrobacter aurescens (strain TC1) protein is Histidinol-phosphate aminotransferase.